The following is a 698-amino-acid chain: Glycine--tRNA ligase beta subunit (698 aa).

This sequence belongs to the class-II aminoacyl-tRNA synthetase family. Tetramer of two alpha and two beta subunits.

It is found in the cytoplasm. It catalyses the reaction tRNA(Gly) + glycine + ATP = glycyl-tRNA(Gly) + AMP + diphosphate. This chain is Glycine--tRNA ligase beta subunit, found in Xanthomonas campestris pv. campestris (strain B100).